The following is a 330-amino-acid chain: 1,8-cineole synthase (330 aa).

Asp-81 contacts Mg(2+). Positions Asp-81–Asp-85 match the DDXXD motif motif. Arg-174 serves as a coordination point for substrate. Positions 220 and 224 each coordinate Mg(2+). The NXXXSXXXE motif signature appears at Asn-220 to Glu-228. Residue Lys-227 coordinates substrate. A Mg(2+)-binding site is contributed by Glu-228. Arg-314–Tyr-315 contributes to the substrate binding site.

This sequence belongs to the terpene synthase family. Homodimer. The cofactor is Mg(2+).

It catalyses the reaction (2E)-geranyl diphosphate + H2O = 1,8-cineole + diphosphate. The enzyme catalyses neryl diphosphate + H2O = 1,8-cineole + diphosphate. In terms of biological role, in vitro, catalyzes the formation of 1,8-cineole from geranyl diphosphate (GPP). Can also accept neryl diphosphate (NPP) as substrate to produce 1,8-cineole. This Streptomyces clavuligerus protein is 1,8-cineole synthase.